We begin with the raw amino-acid sequence, 513 residues long: uncharacterized protein (513 aa).

2 disordered regions span residues 72 to 113 and 155 to 262; these read GVVP…TGQF and IMGG…NPRF. A compositionally biased stretch (low complexity) spans 82-106; that stretch reads ANRTANPNTNSNPNPNATNAQPNPT. 2 stretches are compositionally biased toward polar residues: residues 164–189 and 210–228; these read EANSEQARNANTETSNPPFASAQTQG and TPLNQPPSYAASTQPEFQQ. Over residues 229 to 238 the composition is skewed to low complexity; that stretch reads TTSPIFSSSS. Residues 239–248 are compositionally biased toward pro residues; sequence TPPPPPPRPS. Positions 253–262 are enriched in polar residues; the sequence is GESQNTNPRF. The RING-type; atypical zinc finger occupies 396–437; it reads CTICMEMFKINDDVIQLPCKHYFHENCIKPWLRVNGTCAICR. Residues 439-513 are disordered; it reads PVDPNSQQRN…DDFVDEEPLE (75 aa). Residues 442-493 are compositionally biased toward polar residues; sequence PNSQQRNNTSTDSANGHNPSNHANPSTSTTNDQGATLRNESFNAASQSNLSS.

This is an uncharacterized protein from Schizosaccharomyces pombe (strain 972 / ATCC 24843) (Fission yeast).